Reading from the N-terminus, the 380-residue chain is Dynactin subunit 2 (380 aa).

Residues 1–32 (MADPKFQNLPGIAYDQPDVYETPDDPELDTSD) form a disordered region. Residues 21–32 (ETPDDPELDTSD) are compositionally biased toward acidic residues. Phosphoserine occurs at positions 49, 58, and 86. 2 coiled-coil regions span residues 100 to 135 (VQKC…QSYD) and 353 to 377 (ETFA…AAIS).

It belongs to the dynactin subunit 2 family. As to quaternary structure, subunit of dynactin, a multiprotein complex associated with dynein.

Its subcellular location is the cytoplasm. The protein localises to the cytoskeleton. It localises to the membrane. Its function is as follows. Modulates cytoplasmic dynein binding to an organelle, and plays a role in prometaphase chromosome alignment and spindle organization during mitosis. May play a role in synapse formation during brain development. The chain is Dynactin subunit 2 from Drosophila melanogaster (Fruit fly).